Here is a 132-residue protein sequence, read N- to C-terminus: Fluoride-specific ion channel FluC (132 aa).

A run of 4 helical transmembrane segments spans residues 5 to 25 (LYIALGGALGSVGRFALSGLV), 32 to 52 (TFPWGTLVVNVVGSFIIGFFA), 70 to 90 (FVMTGVLGGFTTFSSFSLQTL), and 105 to 125 (VVGSLVLCLVAVWLGHIAAVG). Residues Gly77 and Thr80 each coordinate Na(+).

Belongs to the fluoride channel Fluc/FEX (TC 1.A.43) family.

The protein resides in the cell inner membrane. It carries out the reaction fluoride(in) = fluoride(out). Its activity is regulated as follows. Na(+) is not transported, but it plays an essential structural role and its presence is essential for fluoride channel function. Functionally, fluoride-specific ion channel. Important for reducing fluoride concentration in the cell, thus reducing its toxicity. This is Fluoride-specific ion channel FluC from Opitutus terrae (strain DSM 11246 / JCM 15787 / PB90-1).